The primary structure comprises 312 residues: Olfactory receptor 2H2 (312 aa).

At 1 to 23 (MVNQSSTPGFLLLGFSEHPGLER) the chain is on the extracellular side. A glycan (N-linked (GlcNAc...) asparagine) is linked at Asn3. A helical transmembrane segment spans residues 24 to 47 (TLFVVVLTSYLLTLVGNTLIILLS). Residues 48–55 (ALDPKLHS) are Cytoplasmic-facing. The helical transmembrane segment at 56–77 (PMYFFLSNLSFLDLCFTTSCVP) threads the bilayer. Residues 78–98 (QMLVNLWGPKKTISFLDCSVQ) lie on the Extracellular side of the membrane. Cys95 and Cys187 form a disulfide bridge. Residues 99–118 (IFIFLSLGTTECILLTVMAF) traverse the membrane as a helical segment. The Cytoplasmic segment spans residues 119-137 (DRYVAVCQPLHYATIIHPR). Residues 138 to 156 (LCWQLASVAWVIGLVESVV) traverse the membrane as a helical segment. Residues 157 to 193 (QTPSTLHLPFCPDRQVDDFVCEVPALIRLSCEDTSYN) are Extracellular-facing. Residues 194-217 (EIQVAVASVFILVVPLSLILVSYG) traverse the membrane as a helical segment. Residues 218 to 234 (AITWAVLRINSAKGRRK) lie on the Cytoplasmic side of the membrane. A helical membrane pass occupies residues 235–257 (AFGTCSSHLTVVTLFYSSVIAVY). At 258-270 (LQPKNPYAQERGK) the chain is on the extracellular side. A helical membrane pass occupies residues 271-290 (FFGLFYAVGTPSLNPLIYTL). The Cytoplasmic portion of the chain corresponds to 291-312 (RNKEVTRAFRRLLGKEMGLTQS).

This sequence belongs to the G-protein coupled receptor 1 family.

The protein resides in the cell membrane. Its function is as follows. Odorant receptor. The polypeptide is Olfactory receptor 2H2 (OR2H2) (Homo sapiens (Human)).